Reading from the N-terminus, the 600-residue chain is MVNNMTDLTAQEPAWQTRDHLDDPVIGELRNRFGPDAFTVQATRTGVPVVWIKREQLLEVGDFLKKLPKPYVMLFDLHGMDERLRTHREGLPAADFSVFYHLISIDRNRDIMLKVALAENDLHVPTFTKLFPNANWYERETWDLFGITFDGHPNLRRIMMPQTWKGHPLRKDYPARATEFSPFELTKAKQDLEMEALTFKPEEWGMKRGTENEDFMFLNLGPNHPSAHGAFRIVLQLDGEEIVDCVPDIGYHHRGAEKMGERQSWHSYIPYTDRIEYLGGCVNEMPYVLAVEKLAGITVPDRVNVIRVMLSELFRINSHLLYISTFIQDVGAMTPVFFAFTDRQKIYDLVEAITGFRMHPAWFRIGGVAHDLPRGWDRLLREFLDWMPKRLASYEKAALQNTILKGRSQGVAAYGAKEALEWGTTGAGLRATGIDFDVRKARPYSGYENFDFEIPVGGGVSDCYTRVMLKVEELRQSLRILEQCLNNMPEGPFKADHPLTTPPPKERTLQHIETLITHFLQVSWGPVMPANESFQMIEATKGINSYYLTSDGSTMSYRTRIRTPSYAHLQQIPAAIRGSLVSDLIVYLGSIDFVMSDVDR.

An NADH dehydrogenase I subunit C region spans residues 1–190 (MVNNMTDLTA…SPFELTKAKQ (190 aa)). Positions 214 to 600 (DFMFLNLGPN…IDFVMSDVDR (387 aa)) are NADH dehydrogenase I subunit D.

It in the N-terminal section; belongs to the complex I 30 kDa subunit family. The protein in the C-terminal section; belongs to the complex I 49 kDa subunit family. NDH-1 is composed of 13 different subunits. Subunits NuoB, CD, E, F, and G constitute the peripheral sector of the complex.

The protein resides in the cell inner membrane. It carries out the reaction a quinone + NADH + 5 H(+)(in) = a quinol + NAD(+) + 4 H(+)(out). Its function is as follows. NDH-1 shuttles electrons from NADH, via FMN and iron-sulfur (Fe-S) centers, to quinones in the respiratory chain. The immediate electron acceptor for the enzyme in this species is believed to be ubiquinone. Couples the redox reaction to proton translocation (for every two electrons transferred, four hydrogen ions are translocated across the cytoplasmic membrane), and thus conserves the redox energy in a proton gradient. In Escherichia coli (strain ATCC 8739 / DSM 1576 / NBRC 3972 / NCIMB 8545 / WDCM 00012 / Crooks), this protein is NADH-quinone oxidoreductase subunit C/D.